The primary structure comprises 338 residues: Glyceraldehyde-3-phosphate dehydrogenase (338 aa).

NAD(+) is bound by residues 11–12 (TI) and Gly-111. Position 140–142 (140–142 (SCN)) interacts with D-glyceraldehyde 3-phosphate. Catalysis depends on Cys-141, which acts as the Nucleophile. Arg-169 lines the NAD(+) pocket. Positions 170 to 195 (GSDPSEVKKGPINSIVPNPPKVPSHH) are disordered. D-glyceraldehyde 3-phosphate is bound at residue 195 to 196 (HG). Gln-302 is an NAD(+) binding site.

The protein belongs to the glyceraldehyde-3-phosphate dehydrogenase family. In terms of assembly, homotetramer.

It localises to the cytoplasm. The catalysed reaction is D-glyceraldehyde 3-phosphate + phosphate + NADP(+) = (2R)-3-phospho-glyceroyl phosphate + NADPH + H(+). The enzyme catalyses D-glyceraldehyde 3-phosphate + phosphate + NAD(+) = (2R)-3-phospho-glyceroyl phosphate + NADH + H(+). The protein operates within carbohydrate degradation; glycolysis; pyruvate from D-glyceraldehyde 3-phosphate: step 1/5. The chain is Glyceraldehyde-3-phosphate dehydrogenase from Methanobrevibacter smithii (strain ATCC 35061 / DSM 861 / OCM 144 / PS).